Reading from the N-terminus, the 553-residue chain is Phospholipase B-like 1 (553 aa).

The first 38 residues, 1-38, serve as a signal peptide directing secretion; sequence MTRGGPGGRPGLPQPPPLLLLLLLLPLLLVTAEPPKPA. A glycan (N-linked (GlcNAc...) (high mannose) asparagine; alternate) is linked at N71. N71 is a glycosylation site (N-linked (GlcNAc...) (hybrid) asparagine; alternate). The propeptide at 209-227 is removed in mature form; sequence LSPTKNGSLKVFKRWDMGH. 2 N-linked (GlcNAc...) (high mannose) asparagine; alternate glycosylation sites follow: N308 and N366. Residues N308 and N366 are each glycosylated (N-linked (GlcNAc...) (hybrid) asparagine; alternate). Residue N411 is glycosylated (N-linked (GlcNAc...) asparagine). 2 cysteine pairs are disulfide-bonded: C470–C475 and C474–C489. N526 carries N-linked (GlcNAc...) (high mannose) asparagine; alternate glycosylation. An N-linked (GlcNAc...) (hybrid) asparagine; alternate glycan is attached at N526.

The protein belongs to the phospholipase B-like family. May form a homodimer, each monomer is composed of a chain A and a chain B. The maturation cleavages that produces chains A and B are required to open the putative substrate binding pocket. Both chains A and B remain associated in the mature protein. In terms of tissue distribution, expressed in neutrophils and monocytes.

It is found in the lysosome. In view of the small size of the putative binding pocket, it has been proposed that it may act as an amidase or a peptidase. Exhibits a weak phospholipase activity, acting on various phospholipids, including phosphatidylcholine, phosphatidylinositol, phosphatidylethanolamine and lysophospholipids. The chain is Phospholipase B-like 1 (PLBD1) from Homo sapiens (Human).